Consider the following 201-residue polypeptide: Holliday junction branch migration complex subunit RuvA (201 aa).

The interval 1-63 (MIEYIKGEIA…EDAYVLYGFA (63 aa)) is domain I. The tract at residues 64-142 (DKQERELFLL…TGAMAATAVG (79 aa)) is domain II. Positions 143–153 (GAAGALLPAMN) are flexible linker. The segment at 153–201 (NAEVQEEAIAALTMLGFAAAPSQKAVLAILKEEPDAPVEKVIKLALKRL) is domain III.

It belongs to the RuvA family. In terms of assembly, homotetramer. Forms an RuvA(8)-RuvB(12)-Holliday junction (HJ) complex. HJ DNA is sandwiched between 2 RuvA tetramers; dsDNA enters through RuvA and exits via RuvB. An RuvB hexamer assembles on each DNA strand where it exits the tetramer. Each RuvB hexamer is contacted by two RuvA subunits (via domain III) on 2 adjacent RuvB subunits; this complex drives branch migration. In the full resolvosome a probable DNA-RuvA(4)-RuvB(12)-RuvC(2) complex forms which resolves the HJ.

Its subcellular location is the cytoplasm. Its function is as follows. The RuvA-RuvB-RuvC complex processes Holliday junction (HJ) DNA during genetic recombination and DNA repair, while the RuvA-RuvB complex plays an important role in the rescue of blocked DNA replication forks via replication fork reversal (RFR). RuvA specifically binds to HJ cruciform DNA, conferring on it an open structure. The RuvB hexamer acts as an ATP-dependent pump, pulling dsDNA into and through the RuvAB complex. HJ branch migration allows RuvC to scan DNA until it finds its consensus sequence, where it cleaves and resolves the cruciform DNA. This is Holliday junction branch migration complex subunit RuvA from Bacteroides fragilis (strain ATCC 25285 / DSM 2151 / CCUG 4856 / JCM 11019 / LMG 10263 / NCTC 9343 / Onslow / VPI 2553 / EN-2).